A 117-amino-acid chain; its full sequence is PBP1-interacting protein XAC1 (117 aa).

Residues 1–60 form a disordered region; the sequence is MSKAPSQPAKKWMSARTLAKSEDATNRKSNTAAPASQPSQQPASVMHERPTPPPPAPVQL. Low complexity predominate over residues 32–44; that stretch reads AAPASQPSQQPAS.

Forms a complex composed of at least MKT1, PBP1, XAC1 and LSM12. Forms a complex composed of at least MKT1L, PBP1, XAC1 and LSM12.

The protein localises to the cytoplasm. In terms of biological role, involved in post-transcriptional regulation of gene expression. This is PBP1-interacting protein XAC1 from Trypanosoma brucei brucei (strain 927/4 GUTat10.1).